Reading from the N-terminus, the 630-residue chain is Multidrug transporter TPO3 (630 aa).

The segment covering 1-35 (MVDQESLVSFSSETSQSINSDIDIESQQQPRQYIP) has biased composition (polar residues). Disordered stretches follow at residues 1-46 (MVDQ…KERL) and 107-157 (TSTA…NQQP). The span at 37-46 (NEKDGNKERL) shows a compositional bias: basic and acidic residues. A compositionally biased stretch (low complexity) spans 125-137 (RRSQNIAASSNSS). N-linked (GlcNAc...) asparagine glycosylation occurs at Asn135. 12 consecutive transmembrane segments (helical) span residues 190–210 (ILSCLVICVAYGSACITGGLF), 222–242 (AAILSCSLMVIGFSLGPLIWS), 252–272 (LAYFISMGLYTIFNIPCALSP), 282–302 (FLCGVFSSSGLCLVGGSIADM), 312–332 (IAFFAFAPYTGPIIGPLVNGF), 342–362 (LIFWINMAFAGVMWIIVAFIP), 423–443 (FYVCLIYSLLYAFFFAFPVVF), 453–473 (LIGLMFIPILIGATMALATTF), 494–514 (LFGAMIGAPFAAAALWILGAT), 519–539 (IIWVGPASSGLAFGYGMVLIY), 553–575 (YASSALATKVFLRSAGGAAFPLF), and 587–607 (WASWLLAFISTAMILLPFGFY).

This sequence belongs to the major facilitator superfamily. DHA1 family. Polyamines/proton antiporter (TC 2.A.1.2.16) subfamily.

The protein resides in the cell membrane. Functionally, cell membrane polyamine/proton antiporter, involved in the detoxification of excess polyamines in the cytoplasm. Involved in the resistance to the imidazole antifungal drugs tioconazole, miconazole, clotrimazole and ketoconazole; to the triazole fluconazole; but not to the antifungals flucytosine or amphotericin B. Plays a role in spermine homeostasis, but spermine accumulation in response to clotrimazole is independent of TPO3. The sequence is that of Multidrug transporter TPO3 from Candida glabrata (strain ATCC 2001 / BCRC 20586 / JCM 3761 / NBRC 0622 / NRRL Y-65 / CBS 138) (Yeast).